A 430-amino-acid chain; its full sequence is Adenylosuccinate synthetase (430 aa).

Residues Gly-12–Lys-18 and Gly-40–Thr-42 contribute to the GTP site. The active-site Proton acceptor is Asp-13. Positions 13 and 40 each coordinate Mg(2+). IMP is bound by residues Asp-13–Lys-16, Asn-38–His-41, Thr-130, Arg-144, Gln-224, Thr-239, and Arg-303. The active-site Proton donor is His-41. Val-299–Arg-305 lines the substrate pocket. GTP contacts are provided by residues Arg-305, Lys-331–Asp-333, and Ser-413–Ser-415.

Belongs to the adenylosuccinate synthetase family. As to quaternary structure, homodimer. It depends on Mg(2+) as a cofactor.

The protein resides in the cytoplasm. It catalyses the reaction IMP + L-aspartate + GTP = N(6)-(1,2-dicarboxyethyl)-AMP + GDP + phosphate + 2 H(+). It functions in the pathway purine metabolism; AMP biosynthesis via de novo pathway; AMP from IMP: step 1/2. Plays an important role in the de novo pathway of purine nucleotide biosynthesis. Catalyzes the first committed step in the biosynthesis of AMP from IMP. The sequence is that of Adenylosuccinate synthetase from Methylobacterium nodulans (strain LMG 21967 / CNCM I-2342 / ORS 2060).